A 98-amino-acid chain; its full sequence is VQ motif-containing protein 1 (98 aa).

The VQ signature appears at 27-36 (FKTIVQELTG).

In terms of assembly, interacts with WRKY33.

It is found in the nucleus. Its function is as follows. May modulate WRKY transcription factor activities. The sequence is that of VQ motif-containing protein 1 from Arabidopsis thaliana (Mouse-ear cress).